The chain runs to 367 residues: Alanine racemase (367 aa).

The active-site Proton acceptor; specific for D-alanine is the Lys40. Lys40 carries the N6-(pyridoxal phosphate)lysine modification. Arg136 is a binding site for substrate. Tyr263 (proton acceptor; specific for L-alanine) is an active-site residue. Met310 contributes to the substrate binding site.

It belongs to the alanine racemase family. Pyridoxal 5'-phosphate is required as a cofactor.

It carries out the reaction L-alanine = D-alanine. It participates in amino-acid biosynthesis; D-alanine biosynthesis; D-alanine from L-alanine: step 1/1. In terms of biological role, catalyzes the interconversion of L-alanine and D-alanine. May also act on other amino acids. This Streptococcus thermophilus (strain ATCC BAA-250 / LMG 18311) protein is Alanine racemase (alr).